A 286-amino-acid polypeptide reads, in one-letter code: MSTNEMNQKKRLNRSGSLSSHLTRSWPWQLTLSYLFFMLILPVIALLSRASDELFKDFWQIAAEPVAISTYVVTLMTALFATLINGFFGVIIAWVLVRYNFPGKRIIDAAIDLPFALPTSVAGLTLATVYSDQGWIGHLFESIGIKVAFTRVGVAVAMIFVSFPFVVRTLQPVLVEIDQELEEAAWSLGASTWRTFWRVIFPPLTPAIVTGVALAFSRAIGEYGSVVIVASNIPFKDLTAPVLIFQRLEQYDYTGATIIGTVILSISLFLLFGINFIQSLNQLYVK.

A run of 7 helical transmembrane segments spans residues Pro-27–Leu-47, Thr-77–Val-97, Ile-106–Leu-126, Val-147–Val-167, Phe-196–Phe-216, Ser-225–Phe-245, and Thr-257–Ile-277. The 202-residue stretch at Tyr-71–Phe-272 folds into the ABC transmembrane type-1 domain.

It belongs to the binding-protein-dependent transport system permease family. CysTW subfamily.

The protein resides in the plastid. It localises to the chloroplast membrane. Part of the ABC transporter complex cysAWTP (TC 3.A.1.6.1) involved in sulfate/thiosulfate import. Probably responsible for the translocation of the substrate across the membrane. In Chlorokybus atmophyticus (Soil alga), this protein is Probable sulfate transport system permease protein cysT (cysT).